A 215-amino-acid chain; its full sequence is LysM and putative peptidoglycan-binding domain-containing protein 2 (215 aa).

Residues 1–40 (MADLSPAPALREGGPRAHRPSAPSPPPRSRSTSEPEEAEL) form a disordered region. An N-acetylalanine modification is found at Ala2. Ser5, Ser24, Ser33, and Ser57 each carry phosphoserine. One can recognise a LysM domain in the interval 71 to 115 (VEHRVRAGDTLQGIALKYGVTMEQIKRANKLFTNDCIFLKKTLSI). Disordered regions lie at residues 135 to 176 (ESET…EVSA) and 195 to 215 (RKLK…LYHS). The span at 145–156 (QEEEPVVSEEEL) shows a compositional bias: acidic residues. Pro residues predominate over residues 157 to 169 (PPPSPQDPDPKPA). The segment covering 196 to 205 (KLKEESRDEE) has biased composition (basic and acidic residues).

The sequence is that of LysM and putative peptidoglycan-binding domain-containing protein 2 (Lysmd2) from Mus musculus (Mouse).